Consider the following 668-residue polypeptide: MGKIHELDNILANQIAAGEVIERPASIVKELVENSLDAHSHRVDIIVENSGLDSVRVIDDGDGIAAEDISLAFHRHATSKINSRHDLFKVQTMGFRGEALPSIASVADVTLTTAQAGQEEGTMIHLRGGKELVVKPAGARQGTDIKVTDLFFNTPARLKYLKSPQTELTRITDIINRLALANPAVAFSFTHNGRELFRSAGNNNLQQVVAAIYGVQAGRKMLEISGADDDFKVSGFVSLPELTRASRQYITITINHRYIRNFELTKAIIQGYESKLMVGRYPIAVINIDLDPVLVDVNVHPAKREVRLSKEQQLIKLIAETIRQRIAVENLIPDVDADQFIPNDDEVADLDRRLKEASPVYHAAPISAVPATEKAATEIPTPEADNPAHADALDSEIPAPIVIHHLEDLNTPAMQKFDERYQNEGEVTPFSAPVPTMTKKPVKPANIELDVHDKQDQQQNRFPDLQYIGQLQGTFLLAQAGDGLYIVDQHAAQERINYEYYRQKIGEVSADQQNFLVPLVLNYSTVDAMTINQHLDTLAAVGLELESFGQNSFILRSHPTWFKEGQEEDTAEEMIDWLIKNGKLTVKEFRMKTAIMMSCKRAIKANHHLDEREAKALLKRLPQCENPFNCPHGRPVTVHFNDQDLEKMFKRIQDSHTPYADDFDDHEF.

Belongs to the DNA mismatch repair MutL/HexB family.

This protein is involved in the repair of mismatches in DNA. It is required for dam-dependent methyl-directed DNA mismatch repair. May act as a 'molecular matchmaker', a protein that promotes the formation of a stable complex between two or more DNA-binding proteins in an ATP-dependent manner without itself being part of a final effector complex. This is DNA mismatch repair protein MutL from Limosilactobacillus reuteri (strain DSM 20016) (Lactobacillus reuteri).